The sequence spans 103 residues: Ribonuclease VapC14 (103 aa).

In terms of domain architecture, PINc spans 3–74 (YVLDTNVVSA…WFDDKVLRIF (72 aa)). Residue D6 coordinates Mg(2+).

The protein belongs to the PINc/VapC protein family. The cofactor is Mg(2+).

Functionally, toxic component of a type II toxin-antitoxin (TA) system. An RNase. The cognate antitoxin is VapB14. The protein is Ribonuclease VapC14 (vapC14) of Mycobacterium tuberculosis (strain CDC 1551 / Oshkosh).